A 496-amino-acid chain; its full sequence is Chromosomal replication initiator protein DnaA (496 aa).

The interval 1-76 is domain I, interacts with DnaA modulators; sequence MKMDSAVSEE…TELWQEENPQ (76 aa). The tract at residues 76-150 is domain II; the sequence is QILKVEVVVR…AAATDAVLGS (75 aa). The interval 151 to 373 is domain III, AAA+ region; that stretch reads PLDPRYTFDT…GAFNQLLFRQ (223 aa). ATP is bound by residues glycine 197, glycine 199, lysine 200, and threonine 201. Residues 374–496 are domain IV, binds dsDNA; that stretch reads SFEPNISIDR…LKRLINDQAA (123 aa).

Belongs to the DnaA family. Oligomerizes as a right-handed, spiral filament on DNA at oriC.

Its subcellular location is the cytoplasm. In terms of biological role, plays an essential role in the initiation and regulation of chromosomal replication. ATP-DnaA binds to the origin of replication (oriC) to initiate formation of the DNA replication initiation complex once per cell cycle. Binds the DnaA box (a 9 base pair repeat at the origin) and separates the double-stranded (ds)DNA. Forms a right-handed helical filament on oriC DNA; dsDNA binds to the exterior of the filament while single-stranded (ss)DNA is stabiized in the filament's interior. The ATP-DnaA-oriC complex binds and stabilizes one strand of the AT-rich DNA unwinding element (DUE), permitting loading of DNA polymerase. After initiation quickly degrades to an ADP-DnaA complex that is not apt for DNA replication. Binds acidic phospholipids. The sequence is that of Chromosomal replication initiator protein DnaA from Brucella suis biovar 1 (strain 1330).